A 439-amino-acid chain; its full sequence is 3beta-hydroxysteroid-dehydrogenase/decarboxylase isoform 1 (439 aa).

16-21 (GGRGFA) contacts NAD(+). N-linked (GlcNAc...) asparagine glycosylation is found at Asn75 and Asn158. NAD(+) is bound by residues Tyr161 and Lys165. Lys165 acts as the Proton donor in catalysis. The N-linked (GlcNAc...) asparagine glycan is linked to Asn327. The region spanning 371 to 439 (VTETIQWKKQ…MKVFGSKKID (69 aa)) is the Reticulon; atypical domain. The next 2 helical transmembrane spans lie at 381-401 (TLIA…TTGS) and 405-425 (IITA…INGI).

This sequence belongs to the 3-beta-HSD family.

The protein localises to the endoplasmic reticulum membrane. It catalyses the reaction a 3beta-hydroxysteroid-4alpha-carboxylate + NAD(+) = a 3-oxosteroid + CO2 + NADH. The enzyme catalyses 4alpha-carboxy-4beta,14alpha-dimethyl-9beta,19-cyclo-5alpha-ergost-24(24(1))-en-3beta-ol + NAD(+) = cycloeucalenone + CO2 + NADH. Its pathway is steroid biosynthesis; zymosterol biosynthesis; zymosterol from lanosterol: step 4/6. In terms of biological role, 3beta-hydroxysteroid-dehydrogenase/decarboxylase involved in sterol synthesis. Catalyzes the formation of 3-oxosteroids from 3beta-hydroxysteroids-4alpha-carboxylate. Involved in the regulation of inflorescence internodes and leaves growth, probably by affecting auxin transporter activity possibly by altering sterol composition in the membranes. The protein is 3beta-hydroxysteroid-dehydrogenase/decarboxylase isoform 1 of Arabidopsis thaliana (Mouse-ear cress).